The chain runs to 316 residues: tRNA dimethylallyltransferase (316 aa).

14–21 (GPTAVGKT) contributes to the ATP binding site. 16–21 (TAVGKT) is a substrate binding site. Residues 39–42 (DSMQ) form an interaction with substrate tRNA region.

Belongs to the IPP transferase family. As to quaternary structure, monomer. It depends on Mg(2+) as a cofactor.

It catalyses the reaction adenosine(37) in tRNA + dimethylallyl diphosphate = N(6)-dimethylallyladenosine(37) in tRNA + diphosphate. Its function is as follows. Catalyzes the transfer of a dimethylallyl group onto the adenine at position 37 in tRNAs that read codons beginning with uridine, leading to the formation of N6-(dimethylallyl)adenosine (i(6)A). The chain is tRNA dimethylallyltransferase from Bacillus cytotoxicus (strain DSM 22905 / CIP 110041 / 391-98 / NVH 391-98).